We begin with the raw amino-acid sequence, 663 residues long: Polyunsaturated fatty acid lipoxygenase ALOX15 (663 aa).

Residues 2–115 (GVYRIRVSTG…ILNLPEGTGC (114 aa)) form the PLAT domain. Residues 116–663 (TVVEDSQGLF…PSLVENSVAI (548 aa)) form the Lipoxygenase domain. Residues His361, His366, His541, His545, and Ile663 each coordinate Fe cation.

This sequence belongs to the lipoxygenase family. Interacts with PEBP1; in response to IL13/interleukin-13, prevents the interaction of PEBP1 with RAF1 to activate the ERK signaling cascade. Fe cation is required as a cofactor. Found in pituitary and pineal glands as well as leukocytes, kidney, aorta, small intestine and cornea. Also expressed by resident peritoneal macrophages (at protein level).

Its subcellular location is the cytoplasm. It is found in the cytosol. It localises to the cell membrane. The protein localises to the lipid droplet. It carries out the reaction (5Z,8Z,11Z,14Z)-eicosatetraenoate + O2 = (12S)-hydroperoxy-(5Z,8Z,10E,14Z)-eicosatetraenoate. It catalyses the reaction (5Z,8Z,11Z,14Z)-eicosatetraenoate + O2 = (15S)-hydroperoxy-(5Z,8Z,11Z,13E)-eicosatetraenoate. The catalysed reaction is (9Z,12Z)-octadecadienoate + O2 = (13S)-hydroperoxy-(9Z,11E)-octadecadienoate. The enzyme catalyses (5Z,8Z,11Z,14Z)-eicosatetraenoate + 2 O2 = (14R,15S)-dihydroperoxy-(5Z,8Z,10E,12E)-eicosatetraenoate. It carries out the reaction (5Z,8Z,11Z,14Z)-eicosatetraenoate + 2 O2 = (8S,15S)-dihydroperoxy-(5Z,9E,11Z,13E)-eicosatetraenoate. It catalyses the reaction (14S,15R)-epoxy-(5Z,8Z,11Z)-eicosatrienoate + O2 = (8S)-hydroperoxy-(14S,15R)-epoxy-(5Z,9E,11Z)-eicosatrienoate. The catalysed reaction is (14S,15R)-epoxy-(5Z,8Z,11Z)-eicosatrienoate + O2 = (12S)-hydroperoxy-(14S,15R)-epoxy-(5Z,8Z,10E)-eicosatrienoate. The enzyme catalyses (14R,15S)-epoxy-(5Z,8Z,11Z)-eicosatrienoate + O2 = (5S)-hydroperoxy-(14R,15S)-epoxy-(6E,8Z,11Z)-eicosatrienoate. It carries out the reaction (14R,15S)-epoxy-(5Z,8Z,11Z)-eicosatrienoate + O2 = (12S)-hydroperoxy-(14R,15S)-epoxy-(5Z,8Z,10E)-eicosatrienoate. It catalyses the reaction (15R)-hydroperoxy-(5Z,8Z,11Z,13E)-eicosatetraenoate = 15-oxo-(5Z,8Z,11Z,13E)-eicosatetraenoate + H2O. The catalysed reaction is (15S)-hydroperoxy-(5Z,8Z,11Z,13E)-eicosatetraenoate = (14S,15S)-epoxy-(5Z,8Z,10E,12E)-eicosatetraenoate + H2O. The enzyme catalyses (12S)-hydroperoxy-(5Z,8Z,10E,14Z)-eicosatetraenoate = (8S)-hydroxy-(11S,12S)-epoxy-(5Z,9E,14Z)-eicosatrienoate. It carries out the reaction (4Z,7Z,10Z,13Z,16Z)-docosapentaenoate + O2 = 14-hydroperoxy-(4Z,7Z,10Z,12E,16Z)-docosapentaenoate. It catalyses the reaction (7Z,10Z,13Z,16Z,19Z)-docosapentaenoate + O2 = 14-hydroperoxy-(7Z,10Z,12E,16Z,19Z)-docosapentaenoate. The catalysed reaction is (4Z,7Z,10Z,13Z,16Z,19Z)-docosahexaenoate + O2 = (14S)-hydroperoxy-(4Z,7Z,10Z,12E,16Z,19Z)-docosahexaenoate. The enzyme catalyses (4Z,7Z,10Z,13Z,16Z,19Z)-docosahexaenoate + O2 = (17S)-hydroperoxy-(4Z,7Z,10Z,13Z,15E,19Z)-docosahexaenoate. It carries out the reaction (7S)-hydroperoxy-(4Z,8E,10Z,13Z,16Z,19Z)-docosahexaenoate + O2 = (7S,14S)-dihydroperoxy-(4Z,8E,10Z,12E,16Z,19Z)-docosahexaenoate. It catalyses the reaction (7S)-hydroperoxy-(4Z,8E,10Z,13Z,16Z,19Z)-docosahexaenoate + O2 = (7S,17S)-dihydroperoxy-(4Z,8E,10Z,13Z,15E,19Z)-docosahexaenoate. The catalysed reaction is (4Z,7Z,10Z,13Z,16Z,19Z)-docosahexaenoate + O2 = (11S)-hydroperoxy-(4Z,7Z,9E,13Z,16Z,19Z)-docosahexaenoate. The enzyme catalyses N-(5Z,8Z,11Z,14Z)-eicosatetraenoyl-taurine + O2 = N-(12S)-hydroperoxy-(5Z,8Z,10E,14Z)-eicosatetraenoyl-taurine. It carries out the reaction N-(5Z,8Z,11Z,14Z)-eicosatetraenoyl-gamma-aminobutanoate + O2 = N-(12S)-hydroperoxy-(5Z,8Z,10E,14Z)-eicosatetraenoyl-gamma-aminobutanoate. It catalyses the reaction N-(5Z,8Z,11Z,14Z)-eicosatetraenoyl-glycine + O2 = N-(12S)-hydroperoxy-(5Z,8Z,10E,14Z)-eicosatetraenoyl-glycine. The catalysed reaction is N-(5Z,8Z,11Z,14Z)-eicosatetraenoyl-L-alanine + O2 = N-(12S)-hydroperoxy-(5Z,8Z,10E,14Z)-eicosatetraenoyl-alanine. The enzyme catalyses N-(5Z,8Z,11Z,14Z)-eicosatetraenoyl-taurine + O2 = N-(15S)-hydroperoxy-(5Z,8Z,11Z,13E)-eicosatetraenoyl-taurine. It carries out the reaction N-(5Z,8Z,11Z,14Z)-eicosatetraenoyl-gamma-aminobutanoate + O2 = N-(15S)-hydroperoxy-(5Z,8Z,11Z,13E)-eicosatetraenoyl-gamma-aminobutanoate. It catalyses the reaction N-(5Z,8Z,11Z,14Z)-eicosatetraenoyl-glycine + O2 = N-(15S)-hydroperoxy-(5Z,8Z,11Z,13E)-eicosatetraenoyl-glycine. The catalysed reaction is N-(5Z,8Z,11Z,14Z)-eicosatetraenoyl-L-alanine + O2 = N-(15S)-hydroperoxy-(5Z,8Z,11Z,13E)-eicosatetraenoyl-alanine. It functions in the pathway lipid metabolism; hydroperoxy eicosatetraenoic acid biosynthesis. In terms of biological role, non-heme iron-containing dioxygenase that catalyzes the stereo-specific peroxidation of free and esterified polyunsaturated fatty acids generating a spectrum of bioactive lipid mediators. It inserts peroxyl groups at C12 or C15 of arachidonate ((5Z,8Z,11Z,14Z)-eicosatetraenoate) producing both 12-hydroperoxyeicosatetraenoate/12-HPETE and 15-hydroperoxyeicosatetraenoate/15-HPETE. It may then act on 12-HPETE to produce hepoxilins, which may show pro-inflammatory properties. Can also peroxidize linoleate ((9Z,12Z)-octadecadienoate) to 13-hydroperoxyoctadecadienoate. May participate in the sequential oxidations of DHA ((4Z,7Z,10Z,13Z,16Z,19Z)-docosahexaenoate) to generate specialized pro-resolving mediators (SPMs)like resolvin D5 ((7S,17S)-diHPDHA) and (7S,14S)-diHPDHA, that actively down-regulate the immune response and have anti-aggregation properties with platelets. Can convert epoxy fatty acids to hydroperoxy-epoxides derivatives followed by an intramolecular nucleophilic substitution leading to the formation of monocyclic endoperoxides. Plays an important role during the maintenance of self-tolerance by peroxidizing membrane-bound phosphatidylethanolamine which can then signal the sorting process for clearance of apoptotic cells during inflammation and prevent an autoimmune response. In addition to its role in the immune and inflammatory responses, this enzyme may play a role in epithelial wound healing in the cornea through production of lipoxin A4 (LXA(4)) and docosahexaenoic acid-derived neuroprotectin D1 (NPD1; 10R,17S-HDHA), both lipid autacoids exhibit anti-inflammatory and neuroprotective properties. Furthermore, it may regulate actin polymerization which is crucial for several biological processes such as the phagocytosis of apoptotic cells. It is also implicated in the generation of endogenous ligands for peroxisome proliferator activated receptor (PPAR-gamma), hence modulating macrophage development and function. It may also exert a negative effect on skeletal development by regulating bone mass through this pathway. As well as participates in ER stress and downstream inflammation in adipocytes, pancreatic islets, and liver. Finally, it is also involved in the cellular response to IL13/interleukin-13. The sequence is that of Polyunsaturated fatty acid lipoxygenase ALOX15 from Mus musculus (Mouse).